The sequence spans 356 residues: Probable arabinogalactan endo-beta-1,4-galactanase A (356 aa).

A signal peptide spans 1–21 (MLGKMILLPLFVLLCHSLASA). N133 carries an N-linked (GlcNAc...) asparagine glycan. E157 functions as the Proton donor in the catalytic mechanism. The Nucleophile role is filled by E268.

Belongs to the glycosyl hydrolase 53 family.

Its subcellular location is the secreted. It carries out the reaction The enzyme specifically hydrolyzes (1-&gt;4)-beta-D-galactosidic linkages in type I arabinogalactans.. In terms of biological role, endogalactanase involved in the degradation of plant cell wall polysaccharides, and more particularly of hairy regions of pectin. This Neosartorya fischeri (strain ATCC 1020 / DSM 3700 / CBS 544.65 / FGSC A1164 / JCM 1740 / NRRL 181 / WB 181) (Aspergillus fischerianus) protein is Probable arabinogalactan endo-beta-1,4-galactanase A (galA).